The sequence spans 225 residues: 2-C-methyl-D-erythritol 4-phosphate cytidylyltransferase (225 aa).

Belongs to the IspD/TarI cytidylyltransferase family. IspD subfamily.

The enzyme catalyses 2-C-methyl-D-erythritol 4-phosphate + CTP + H(+) = 4-CDP-2-C-methyl-D-erythritol + diphosphate. Its pathway is isoprenoid biosynthesis; isopentenyl diphosphate biosynthesis via DXP pathway; isopentenyl diphosphate from 1-deoxy-D-xylulose 5-phosphate: step 2/6. Its function is as follows. Catalyzes the formation of 4-diphosphocytidyl-2-C-methyl-D-erythritol from CTP and 2-C-methyl-D-erythritol 4-phosphate (MEP). The sequence is that of 2-C-methyl-D-erythritol 4-phosphate cytidylyltransferase from Haemophilus influenzae (strain PittEE).